The following is a 151-amino-acid chain: Cytochrome c-type biogenesis protein CcmE (151 aa).

At 1-9 the chain is on the cytoplasmic side; it reads MKGLKKKRR. Residues 10–30 traverse the membrane as a helical; Signal-anchor for type II membrane protein segment; the sequence is IQIITLAFVALAGSTALIGYA. Residues 31 to 151 are Periplasmic-facing; the sequence is MRDGINFFRS…FQHTEDQPQG (121 aa). Positions 123 and 127 each coordinate heme.

Belongs to the CcmE/CycJ family.

The protein resides in the cell inner membrane. In terms of biological role, heme chaperone required for the biogenesis of c-type cytochromes. Transiently binds heme delivered by CcmC and transfers the heme to apo-cytochromes in a process facilitated by CcmF and CcmH. The polypeptide is Cytochrome c-type biogenesis protein CcmE (Cereibacter sphaeroides (strain ATCC 17025 / ATH 2.4.3) (Rhodobacter sphaeroides)).